A 134-amino-acid polypeptide reads, in one-letter code: Small ribosomal subunit protein uS9 (134 aa).

Positions 97–134 (ENRQDLKSCGFLTRDPRKKERKKYGHKKARKSFQFSKR) are disordered. Residues 115–134 (KERKKYGHKKARKSFQFSKR) show a composition bias toward basic residues.

The protein belongs to the universal ribosomal protein uS9 family.

The chain is Small ribosomal subunit protein uS9 (rpsI) from Chlamydia pneumoniae (Chlamydophila pneumoniae).